Consider the following 453-residue polypeptide: Macrophage scavenger receptor types I and II (453 aa).

The Cytoplasmic portion of the chain corresponds to 1–50 (MAQWDDFPDQQEDTDSCTESVKFDARSVTALLPPHPKNGPTLQERMKSYK). Serine 27 is modified (phosphoserine). Residues 51–76 (TALITLYLIVFVVLVPIIGIVAAQLL) traverse the membrane as a helical; Signal-anchor for type II membrane protein segment. The segment at 77-108 (KWETKNCTVGSVNADISPSPEGKGNGSEDEMR) is spacer. Residues 77 to 453 (KWETKNCTVG…DEDAGVTCTT (377 aa)) are Extracellular-facing. N-linked (GlcNAc...) asparagine glycosylation is found at asparagine 82, asparagine 101, asparagine 142, asparagine 183, asparagine 220, asparagine 248, and asparagine 266. Positions 194–255 (ETLNGRVQEN…LNNITNDLRL (62 aa)) form a coiled coil. Disordered regions lie at residues 267–295 (ITLLQGPPGPPGEKGDRGPPGQNGIPGFP) and 313–349 (PGVRGFPGPMGKTGKPGLNGQKGQKGEKGSGSMQRQS). One can recognise a Collagen-like domain in the interval 272 to 343 (GPPGPPGEKG…KGQKGEKGSG (72 aa)). Positions 352–452 (VRLVGGSGPH…HDEDAGVTCT (101 aa)) constitute an SRCR domain. Cystine bridges form between cysteine 377-cysteine 441, cysteine 390-cysteine 451, and cysteine 421-cysteine 431.

As to quaternary structure, homotrimer. Interacts with MYO18A.

It is found in the membrane. Functionally, membrane glycoproteins implicated in the pathologic deposition of cholesterol in arterial walls during atherogenesis. Two types of receptor subunits exist. These receptors mediate the endocytosis of a diverse group of macromolecules, including modified low density lipoproteins (LDL). This chain is Macrophage scavenger receptor types I and II (MSR1), found in Bos taurus (Bovine).